Reading from the N-terminus, the 210-residue chain is tRNA (guanine-N(7)-)-methyltransferase (210 aa).

Residues Glu36, Glu61, Asp90, and Asp112 each contribute to the S-adenosyl-L-methionine site. Asp112 is an active-site residue. Residues Lys116, Asp148, and 188–191 (TEYE) each bind substrate.

Belongs to the class I-like SAM-binding methyltransferase superfamily. TrmB family.

It carries out the reaction guanosine(46) in tRNA + S-adenosyl-L-methionine = N(7)-methylguanosine(46) in tRNA + S-adenosyl-L-homocysteine. Its pathway is tRNA modification; N(7)-methylguanine-tRNA biosynthesis. Catalyzes the formation of N(7)-methylguanine at position 46 (m7G46) in tRNA. In Mycoplasma pneumoniae (strain ATCC 29342 / M129 / Subtype 1) (Mycoplasmoides pneumoniae), this protein is tRNA (guanine-N(7)-)-methyltransferase.